The sequence spans 216 residues: Nudix hydrolase 26, chloroplastic (216 aa).

Residues 1–53 constitute a chloroplast transit peptide; the sequence is MALYRPLLLHHPTSPSVTTFLRNYPSKPIKFSSLPFLHRCRKSRVSSSSARCC. The Nudix hydrolase domain occupies 62–209; it reads GYRRNVGVCL…KKPVYKEVMS (148 aa). A Nudix box motif is present at residues 95–116; the sequence is GGIDEGEDPRVAVMRELKEETG. Residues glutamate 110 and glutamate 114 each coordinate Mn(2+).

It belongs to the Nudix hydrolase family. Mg(2+) is required as a cofactor. Mn(2+) serves as cofactor. Expressed in roots, leaves, stems and inflorescences.

The protein resides in the plastid. Its subcellular location is the chloroplast. Its function is as follows. Mediates the hydrolysis of some nucleoside diphosphate derivatives. Can use diadenosine 5',5'''-P(1)P(5) pentaphosphate (Ap(5)A), diadenosine 5',5'''-P(1)P(4) tetraphosphate (Ap(4)A) and diadenosine 5',5'''-P(1)P(3) triphosphate (Ap(3)A) as substrates. This chain is Nudix hydrolase 26, chloroplastic (NUDT26), found in Arabidopsis thaliana (Mouse-ear cress).